We begin with the raw amino-acid sequence, 261 residues long: ATP synthase subunit a (261 aa).

Helical transmembrane passes span 45-65 (ITNVTMWMAIAVLVIAAILVL), 107-127 (VMTLFLFVLCGNVLGLLPLSF), 133-153 (MAVTVPLALMVFVGVTALGFM), 162-182 (MFWVTSAPLAIRPVLAVIEVI), 209-229 (IAGFASIAVVSPVVVGAVTAI), and 232-252 (LELLVAVVQAYVFTILTCVYL).

Belongs to the ATPase A chain family. In terms of assembly, F-type ATPases have 2 components, CF(1) - the catalytic core - and CF(0) - the membrane proton channel. CF(1) has five subunits: alpha(3), beta(3), gamma(1), delta(1), epsilon(1). CF(0) has four main subunits: a, b, b' and c.

The protein localises to the cell inner membrane. Key component of the proton channel; it plays a direct role in the translocation of protons across the membrane. This is ATP synthase subunit a from Cereibacter sphaeroides (strain ATCC 17025 / ATH 2.4.3) (Rhodobacter sphaeroides).